Consider the following 273-residue polypeptide: NH(3)-dependent NAD(+) synthetase (273 aa).

Glycine 34–serine 41 serves as a coordination point for ATP. Aspartate 40 serves as a coordination point for Mg(2+). Arginine 116 is a deamido-NAD(+) binding site. Threonine 136 lines the ATP pocket. Glutamate 141 provides a ligand contact to Mg(2+). ATP-binding residues include lysine 165 and serine 187.

It belongs to the NAD synthetase family. As to quaternary structure, homodimer.

The enzyme catalyses deamido-NAD(+) + NH4(+) + ATP = AMP + diphosphate + NAD(+) + H(+). It functions in the pathway cofactor biosynthesis; NAD(+) biosynthesis; NAD(+) from deamido-NAD(+) (ammonia route): step 1/1. Functionally, catalyzes the ATP-dependent amidation of deamido-NAD to form NAD. Uses ammonia as a nitrogen source. The polypeptide is NH(3)-dependent NAD(+) synthetase (Trichlorobacter lovleyi (strain ATCC BAA-1151 / DSM 17278 / SZ) (Geobacter lovleyi)).